Reading from the N-terminus, the 173-residue chain is Thaumatin-like protein PWIR2 (173 aa).

A signal peptide spans 1–20; it reads MATSPVLFLLLAVFAAGASA.

It belongs to the thaumatin family.

The polypeptide is Thaumatin-like protein PWIR2 (Triticum aestivum (Wheat)).